The sequence spans 447 residues: Ribulose bisphosphate carboxylase large chain (447 aa).

Positions 89 and 139 each coordinate substrate. The active-site Proton acceptor is the K141. A substrate-binding site is contributed by K143. K167, D169, and E170 together coordinate Mg(2+). K167 carries the post-translational modification N6-carboxylysine. The Proton acceptor role is filled by H260. R261, H293, and S345 together coordinate substrate.

It belongs to the RuBisCO large chain family. Type I subfamily. As to quaternary structure, heterohexadecamer of 8 large chains and 8 small chains; disulfide-linked. The disulfide link is formed within the large subunit homodimers. Mg(2+) serves as cofactor. The disulfide bond which can form in the large chain dimeric partners within the hexadecamer appears to be associated with oxidative stress and protein turnover.

It localises to the plastid. The protein localises to the chloroplast. It carries out the reaction 2 (2R)-3-phosphoglycerate + 2 H(+) = D-ribulose 1,5-bisphosphate + CO2 + H2O. The catalysed reaction is D-ribulose 1,5-bisphosphate + O2 = 2-phosphoglycolate + (2R)-3-phosphoglycerate + 2 H(+). Functionally, ruBisCO catalyzes two reactions: the carboxylation of D-ribulose 1,5-bisphosphate, the primary event in carbon dioxide fixation, as well as the oxidative fragmentation of the pentose substrate in the photorespiration process. Both reactions occur simultaneously and in competition at the same active site. The polypeptide is Ribulose bisphosphate carboxylase large chain (Convolvulus tricolor (Dwarf morning glory)).